Here is a 439-residue protein sequence, read N- to C-terminus: GTPase Der (439 aa).

2 consecutive EngA-type G domains span residues 3 to 167 (PTVA…DKVG) and 176 to 351 (IKVA…GNYT). Residues 9–16 (GRPNVGKS), 56–60 (DTGGI), 119–122 (NKID), 182–189 (GKPNTGKS), 229–233 (DTAGL), and 294–297 (NKWD) each bind GTP. Positions 352–436 (RRITTGQIND…PIVFLIREKG (85 aa)) constitute a KH-like domain.

Belongs to the TRAFAC class TrmE-Era-EngA-EngB-Septin-like GTPase superfamily. EngA (Der) GTPase family. In terms of assembly, associates with the 50S ribosomal subunit.

Functionally, GTPase that plays an essential role in the late steps of ribosome biogenesis. In Caldicellulosiruptor saccharolyticus (strain ATCC 43494 / DSM 8903 / Tp8T 6331), this protein is GTPase Der.